A 749-amino-acid chain; its full sequence is Tryptophan 2-monooxygenase (749 aa).

FMN contacts are provided by Ser-232, Glu-252, Lys-260, and Arg-280. Residue Arg-280 participates in substrate binding.

It belongs to the tryptophan 2-monooxygenase family. Requires FMN as cofactor.

The enzyme catalyses L-tryptophan + O2 = indole-3-acetamide + CO2 + H2O. It participates in plant hormone metabolism; auxin biosynthesis. In Rhizobium rhizogenes (Agrobacterium rhizogenes), this protein is Tryptophan 2-monooxygenase (aux1).